The chain runs to 325 residues: Glutarate 2-hydroxylase (325 aa).

His160, Asp162, and His292 together coordinate Fe cation.

Belongs to the glutarate hydroxylase family. Homotetramer. Requires Fe(2+) as cofactor.

The enzyme catalyses glutarate + 2-oxoglutarate + O2 = (S)-2-hydroxyglutarate + succinate + CO2. The protein operates within amino-acid degradation. Acts as an alpha-ketoglutarate-dependent dioxygenase catalyzing hydroxylation of glutarate (GA) to L-2-hydroxyglutarate (L2HG). Functions in a L-lysine degradation pathway that proceeds via cadaverine, glutarate and L-2-hydroxyglutarate. The chain is Glutarate 2-hydroxylase from Pseudomonas putida (strain ATCC 700007 / DSM 6899 / JCM 31910 / BCRC 17059 / LMG 24140 / F1).